The sequence spans 525 residues: GMP synthase [glutamine-hydrolyzing] (525 aa).

The region spanning 3–200 (KILILDFGSQ…VLHVAGCKPS (198 aa)) is the Glutamine amidotransferase type-1 domain. The active-site Nucleophile is cysteine 79. Active-site residues include histidine 174 and glutamate 176. The GMPS ATP-PPase domain occupies 201-393 (WTMPNYIDEA…LGLPHDMVYR (193 aa)). 228 to 234 (SGGVDSS) is an ATP binding site.

As to quaternary structure, homodimer.

The catalysed reaction is XMP + L-glutamine + ATP + H2O = GMP + L-glutamate + AMP + diphosphate + 2 H(+). It participates in purine metabolism; GMP biosynthesis; GMP from XMP (L-Gln route): step 1/1. Functionally, catalyzes the synthesis of GMP from XMP. The polypeptide is GMP synthase [glutamine-hydrolyzing] (Chromobacterium violaceum (strain ATCC 12472 / DSM 30191 / JCM 1249 / CCUG 213 / NBRC 12614 / NCIMB 9131 / NCTC 9757 / MK)).